Consider the following 139-residue polypeptide: Large ribosomal subunit protein uL16c (139 aa).

Residues 1 to 17 (MLSPKKTKFRKQHRGRM) are compositionally biased toward basic residues. Residues 1–23 (MLSPKKTKFRKQHRGRMKGSASK) are disordered.

It belongs to the universal ribosomal protein uL16 family. As to quaternary structure, part of the 50S ribosomal subunit.

Its subcellular location is the plastid. It localises to the chloroplast. This is Large ribosomal subunit protein uL16c from Pyropia yezoensis (Susabi-nori).